The chain runs to 848 residues: Probable disease resistance protein At5g43730 (848 aa).

Residues 25-62 adopt a coiled-coil conformation; it reads SNYIHLMESNLDALQKTMEELKNGRDDLLARVSIEEDK. Residues 137-439 enclose the NB-ARC domain; the sequence is VAQKIIPKAE…CEGYINPNRY (303 aa). 179–186 is an ATP binding site; sequence GMGGIGKT. 5 LRR repeats span residues 534–555, 558–580, 582–604, 605–627, and 629–649; these read NLSTLLLPYNKLVDISVGFFLF, KLVVLDLSTNWSLIELPEEISNL, SLQYLNLSLTGIKSLPVGLKKLR, KLIYLNLEFTNVLESLVGIATTL, and NLQVLKLFYSLFCVDDIIMEE.

The protein belongs to the disease resistance NB-LRR family.

In terms of biological role, probable disease resistance protein. This chain is Probable disease resistance protein At5g43730, found in Arabidopsis thaliana (Mouse-ear cress).